The primary structure comprises 501 residues: MNSLLSLEHISKGFPGVRALNDISFELQSGEIHALLGENGAGKSTLMKILCGVYKQDAGRILIDGAPVDFRHYHDATDAGVGVIFQEFSLIPYLNAVENIFLGRELRNALGMLRKKDMRAQAEKICQRLDVNIDLDAPVDHLSVAEQQFVEIAKALSLDARILVLDEPTATLTPNEAEHLFRVMRELKAQGVGMVFISHHMEEIYEICDRITVLRDGEKIGDREVGEVAVDELLEMMVGRKISNSFPEKTPLRNDGDIVIDARAIQLHKNGPVNSFQVRKGEILGFAGLVGSGRTETALAMIGALPACRKEVSVEGEPAAMKTPAEALRRGIGLLPESRKKEGLILPFSIRENITLNNLAKVSGAASVIDRKRESEVAETLSAKVRVKAPDCETPVGNLSGGNQQKVVIARWLNNDCKVLIFDEPTRGIDVGAKTEIYRLMKQLTAQGVSIIMISSELPEVVGVSDRVAVFRQGSIVKILEGDAVNSNEIMRYATGGVKDE.

ABC transporter domains lie at L5–K241 and L252–V498. G37 to S44 contributes to the ATP binding site.

It belongs to the ABC transporter superfamily. Ribose importer (TC 3.A.1.2.1) family. As to quaternary structure, the complex is composed of an ATP-binding protein (RbsA), two transmembrane proteins (RbsC) and a solute-binding protein (RbsB).

The protein resides in the cell inner membrane. It carries out the reaction D-ribose(out) + ATP + H2O = D-ribose(in) + ADP + phosphate + H(+). In terms of biological role, part of the ABC transporter complex RbsABC involved in ribose import. Responsible for energy coupling to the transport system. This chain is Ribose import ATP-binding protein RbsA, found in Hahella chejuensis (strain KCTC 2396).